We begin with the raw amino-acid sequence, 225 residues long: Rho GDP-dissociation inhibitor 3 (225 aa).

The protein belongs to the Rho GDI family. Primarily expressed in pancreas and brain.

The protein resides in the cytoplasm. In terms of biological role, inhibits GDP/GTP exchange reaction of RhoB. Interacts specifically with the GDP- and GTP-bound forms of post-translationally processed Rhob and Rhog proteins, both of which show a growth-regulated expression in mammalian cells. Stimulates the release of the GDP-bound but not the GTP-bound RhoB protein. Also inhibits the GDP/GTP exchange of RhoB but shows less ability to inhibit the dissociation of prebound GTP. This is Rho GDP-dissociation inhibitor 3 (ARHGDIG) from Homo sapiens (Human).